A 178-amino-acid polypeptide reads, in one-letter code: Caveolin-1 (178 aa).

Ser-2 carries the post-translational modification N-acetylserine. Phosphoserine is present on Ser-2. The tract at residues 2–94 is required for homooligomerization; the sequence is SGGKYVDSEG…WKASFTTFTV (93 aa). Residues 2 to 104 lie on the Cytoplasmic side of the membrane; the sequence is SGGKYVDSEG…TKYWFYRLLS (103 aa). Lys-5 is subject to N6-acetyllysine; alternate. Residue Lys-5 forms a Glycyl lysine isopeptide (Lys-Gly) (interchain with G-Cter in ubiquitin); alternate linkage. Tyr-6 is subject to Phosphotyrosine. Phosphoserine is present on Ser-9. Tyr-14 carries the post-translational modification Phosphotyrosine; by ABL1. Residue Tyr-25 is modified to Phosphotyrosine. Residues Lys-26, Lys-30, Lys-39, Lys-47, and Lys-57 each participate in a glycyl lysine isopeptide (Lys-Gly) (interchain with G-Cter in ubiquitin) cross-link. Residues 82 to 94 form an interaction with CAVIN3 region; it reads DGIWKASFTTFTV. An intramembrane region (helical) is located at residues 105 to 125; that stretch reads ALFGIPMALIWGIYFAILSFL. At 126–178 the chain is on the cytoplasmic side; it reads HIWAVVPCIKSFLIEIQCISRVYSIYVHTFCDPLFEAIGKIFSNIRINMQKEI. Residues 131-142 are interacts with SPRY1, SPRY2, SPRY3 and SPRY4; that stretch reads VPCIKSFLIEIQ. Residues Cys-133, Cys-143, and Cys-156 are each lipidated (S-palmitoyl cysteine). Residues 149–160 are interacts with SPRY1, SPRY2, and SPRY4; the sequence is SIYVHTFCDPLF. The interval 167-178 is interacts with SPRY1, SPRY2, SPRY3 and SPRY4; that stretch reads FSNIRINMQKEI.

Belongs to the caveolin family. In terms of assembly, homooligomer. Interacts with GLIPR2. Interacts with NOSTRIN. Interacts with SNAP25 and STX1A. Interacts (via the N-terminus) with DPP4; the interaction is direct. Interacts with CTNNB1, CDH1 and JUP. Interacts with PACSIN2; this interaction induces membrane tubulation. Interacts with SLC7A9. Interacts with BMX and BTK. Interacts with TGFBR1. Interacts with CAVIN3 (via leucine-zipper domain) in a cholesterol-sensitive manner. Interacts with CAVIN1. Interacts with EHD2 in a cholesterol-dependent manner. Forms a ternary complex with UBXN6 and VCP; mediates CAV1 targeting to lysosomes for degradation. Interacts with ABCG1; this interaction regulates ABCG1-mediated cholesterol efflux. Interacts with NEU3; this interaction enhances NEU3 sialidase activity within caveola. Interacts (via C-terminus) with SPRY1, SPRY2 (via C-terminus), SPRY3, and SPRY4. Interacts with IGFBP5; this interaction allows trafficking of IGFBP5 from the plasma membrane to the nucleus. In terms of processing, phosphorylated at Tyr-14 by ABL1 in response to oxidative stress. Ubiquitinated. Undergo monoubiquitination and multi- and/or polyubiquitination. Monoubiquitination of N-terminal lysines promotes integration in a ternary complex with UBXN6 and VCP which promotes oligomeric CAV1 targeting to lysosomes for degradation. Ubiquitinated by ZNRF1; leading to degradation and modulation of the TLR4-mediated immune response.

It localises to the golgi apparatus membrane. The protein localises to the cell membrane. It is found in the membrane. The protein resides in the caveola. Its subcellular location is the membrane raft. Functionally, may act as a scaffolding protein within caveolar membranes. Forms a stable heterooligomeric complex with CAV2 that targets to lipid rafts and drives caveolae formation. Mediates the recruitment of CAVIN proteins (CAVIN1/2/3/4) to the caveolae. Interacts directly with G-protein alpha subunits and can functionally regulate their activity. Involved in the costimulatory signal essential for T-cell receptor (TCR)-mediated T-cell activation. Its binding to DPP4 induces T-cell proliferation and NF-kappa-B activation in a T-cell receptor/CD3-dependent manner. Recruits CTNNB1 to caveolar membranes and may regulate CTNNB1-mediated signaling through the Wnt pathway. Negatively regulates TGFB1-mediated activation of SMAD2/3 by mediating the internalization of TGFBR1 from membrane rafts leading to its subsequent degradation. Binds 20(S)-hydroxycholesterol (20(S)-OHC). This is Caveolin-1 (CAV1) from Muntiacus muntjak (Barking deer).